Consider the following 188-residue polypeptide: Elongation factor P (188 aa).

This sequence belongs to the elongation factor P family.

Its subcellular location is the cytoplasm. The protein operates within protein biosynthesis; polypeptide chain elongation. Involved in peptide bond synthesis. Stimulates efficient translation and peptide-bond synthesis on native or reconstituted 70S ribosomes in vitro. Probably functions indirectly by altering the affinity of the ribosome for aminoacyl-tRNA, thus increasing their reactivity as acceptors for peptidyl transferase. The chain is Elongation factor P from Leptospira biflexa serovar Patoc (strain Patoc 1 / Ames).